Here is a 553-residue protein sequence, read N- to C-terminus: Mucolipin-3 (553 aa).

The Cytoplasmic segment spans residues 1 to 62; sequence MANPEIVISS…FWARGRKPWK (62 aa). An interaction with phosphoinositides region spans residues 52–62; sequence KFWARGRKPWK. Residues 63–83 form a helical membrane-spanning segment; the sequence is LAIQILKIAMVTIQLVLFGLS. At 84-283 the chain is on the extracellular side; the sequence is NQMVVAFKEE…VSGSIQKNTH (200 aa). The extracellular/lumenal pore loop stretch occupies residues 104-118; it reads KGYIDRMDDTYAVYT. Asparagine 138 carries N-linked (GlcNAc...) asparagine glycosylation. An intrachain disulfide couples cysteine 159 to cysteine 185. N-linked (GlcNAc...) asparagine glycosylation is present at asparagine 205. The cysteines at positions 238 and 269 are disulfide-linked. The helical transmembrane segment at 284-304 threads the bilayer; that stretch reads NMMIFDAFVILTCLVSLILCI. Residues 305–341 lie on the Cytoplasmic side of the membrane; sequence RSVISGLQLQQEFVNFFLLHYKKDVSVSDQMEFVNGW. A helical transmembrane segment spans residues 342–362; sequence YIMIIISDILTIIGSILKMEI. Residues 363 to 371 are Extracellular-facing; that stretch reads QAKSLTSYD. Residues 372–392 form a helical membrane-spanning segment; sequence VCSILLGTSTMLVWLGVIRYL. Residues 393-414 lie on the Cytoplasmic side of the membrane; sequence GFFAKYNLLILTLQAALPNVIR. The helical transmembrane segment at 415–435 threads the bilayer; it reads FCCCAAMIYLGYCFCGWIVLG. Over 436-443 the chain is Extracellular; that stretch reads PYHNKFRS. Positions 444–464 form an intramembrane region, pore-forming; sequence LNMVSECLFSLINGDDMFATF. Residues 456-459 carry the Selectivity filter motif; the sequence is NGDD. The Extracellular segment spans residues 465–475; sequence AKMQQKSYLVW. Residues 476–497 traverse the membrane as a helical segment; that stretch reads LFSRIYLYSFISLFIYMILSLF. The Cytoplasmic segment spans residues 498 to 553; that stretch reads IALITDTYETIKHYQQDGFPETELRTFISECKDLPNSGKFRLEDDPPVSLFCCCKK.

The protein belongs to the transient receptor (TC 1.A.4) family. Polycystin subfamily. MCOLN3 sub-subfamily. Homotetramer. Can heterooligomerize with MCOLN1; heteromeric assemblies have different channel properties as compared to the respective homooligomers and may be tissue-specific. May heterooligomerize with TRPV5 to form a functional distinct ion channel. Interacts with GABARAPL2. In terms of processing, N-glycosylated.

It localises to the lysosome membrane. Its subcellular location is the early endosome membrane. It is found in the late endosome membrane. The protein localises to the cytoplasmic vesicle. The protein resides in the autophagosome membrane. It localises to the cell projection. Its subcellular location is the stereocilium membrane. It carries out the reaction Ca(2+)(in) = Ca(2+)(out). It catalyses the reaction Mg(2+)(in) = Mg(2+)(out). The catalysed reaction is K(+)(in) = K(+)(out). The enzyme catalyses Na(+)(in) = Na(+)(out). With respect to regulation, channel activity is activated by PtdIns(3,5)P2 (phosphatidylinositol 3,5-bisphosphate). Inhibited by lumenal H(+) and Na(+). The channel pore shows dynamic behavior and undergoes spontaneous, Ca(2+)-dependent modulation when conducting Ca(2+). Functionally, nonselective cation channel probably playing a role in the regulation of membrane trafficking events. Acts as a Ca(2+)-permeable cation channel with inwardly rectifying activity. Mediates release of Ca(2+) from endosomes to the cytoplasm, contributes to endosomal acidification and is involved in the regulation of membrane trafficking and fusion in the endosomal pathway. Also permeable to Mg(2+), Na(+) and K(+). Does not seem to act as mechanosensory transduction channel in inner ear sensory hair cells. Proposed to play a critical role at the cochlear stereocilia ankle-link region during hair-bundle growth. Involved in the regulation of autophagy. Through association with GABARAPL2 may be involved in autophagosome formation possibly providing Ca(2+) for the fusion process. Through a possible and probably tissue-specific heteromerization with MCOLN1 may be at least in part involved in many lysosome-dependent cellular events. Possible heteromeric ion channel assemblies with TRPV5 show pharmacological similarity with TRPML3. The polypeptide is Mucolipin-3 (Callithrix jacchus (White-tufted-ear marmoset)).